The sequence spans 407 residues: Methyltransferase/ribosomally synthesized type I borosin cyclic peptide precursor ceuMA2 (407 aa).

The tract at residues 1–246 (MATTKTGSLT…TTSTLYIPPR (246 aa)) is methyltransferase domain. Active-site residues include Arg70, Tyr74, and Tyr96. The S-adenosyl-L-methionine site is built by Tyr96, His98, Val101, Ala128, Gln170, Gly208, Ser239, and Thr240. The clasp domain stretch occupies residues 247 to 370 (EIAPVDQRIM…GPVYKVMRAT (124 aa)). Residues 371-393 (PAAIAAGQEHSLDEIAGSADSES) are precursor leader. Thr399 and Thr400 each carry N-methylthreonine. N-methylisoleucine is present on Ile401. Residues Val402 and Val403 each carry the N-methylvaline modification. Ile404 bears the N-methylisoleucine mark. An N-methylvaline modification is found at Val405. N-methylhistidine is present on His406.

It in the N-terminal section; belongs to the precorrin methyltransferase family. In terms of assembly, homodimer. Post-translationally, ceuMA2 automethylates at Thr-399, Thr-400, Ile-401, Val-402, Val-403, Ile-404, Val-405 and His-406 before being processed by a prolyloligopeptidase which likely forms a peptidyl ester upon removal of the follower propeptide, which then undergoes macrocyclization with the N-terminus of the modified core peptide. Peptide backbone alpha-N-methylations change the physicochemical properties of amide bonds to provide structural constraints and other favorable characteristics including biological membrane permeability to peptides.

Its pathway is secondary metabolite biosynthesis. Functionally, fusion protein of the methyltransferase ceuM2 and a type I borosin core peptide; part of the gene cluster that mediates the biosynthesis of a type I borosin, a highly methylated cyclic peptide with potent biological activities. Type I borosins derive from the C-terminus of the fusion protein, and it is the same protein that methylates its own C-terminus using S-adenosyl methionine (SAM). The C-terminus is subsequently cleaved off and macrocyclized by a prolyloligopeptidase to give the final product. The polypeptide is Methyltransferase/ribosomally synthesized type I borosin cyclic peptide precursor ceuMA2 (Cerrena unicolor (Canker rot fungus)).